Reading from the N-terminus, the 287-residue chain is MTVIACLREILSTARRTAVAEGASDAPASRVVLVPTMGALHEGHVRLVNHARDLGGIVVVSIFVNPLQFGPGEDLDRYPRTLDADVALLDGLADVVFAPAAAEMYPQGESSTRVTAGAVGGLFEGASRPGHFDGMLTVVAKLFGIAQPDVAVFGQKDAQQVHLVGRMVDDLNLPVTIAVVDTVREPDGLALSSRNRYLDADARAAAATLSRALADGVAACAGGAAAVLTAARVRVEAEPVVRLDYLVIVDQGTFREVAPNYHGPAFLLIAARVGSTRLIDNERITLP.

37–44 (MGALHEGH) is an ATP binding site. Histidine 44 (proton donor) is an active-site residue. Glutamine 68 contributes to the (R)-pantoate binding site. A beta-alanine-binding site is contributed by glutamine 68. Residue 154 to 157 (GQKD) coordinates ATP. Glutamine 160 contacts (R)-pantoate. ATP is bound by residues valine 183 and 191 to 194 (LSSR).

This sequence belongs to the pantothenate synthetase family. In terms of assembly, homodimer.

It is found in the cytoplasm. It carries out the reaction (R)-pantoate + beta-alanine + ATP = (R)-pantothenate + AMP + diphosphate + H(+). Its pathway is cofactor biosynthesis; (R)-pantothenate biosynthesis; (R)-pantothenate from (R)-pantoate and beta-alanine: step 1/1. Functionally, catalyzes the condensation of pantoate with beta-alanine in an ATP-dependent reaction via a pantoyl-adenylate intermediate. The sequence is that of Pantothenate synthetase from Leifsonia xyli subsp. xyli (strain CTCB07).